A 142-amino-acid chain; its full sequence is Deoxyuridine 5'-triphosphate nucleotidohydrolase (142 aa).

This sequence belongs to the dUTPase family. Mg(2+) is required as a cofactor.

It carries out the reaction dUTP + H2O = dUMP + diphosphate + H(+). This enzyme is involved in nucleotide metabolism: it produces dUMP, the immediate precursor of thymidine nucleotides and it decreases the intracellular concentration of dUTP so that uracil cannot be incorporated into DNA. This is Deoxyuridine 5'-triphosphate nucleotidohydrolase (DUT) from Swinepox virus (strain Kasza) (SWPV).